A 477-amino-acid chain; its full sequence is UDP-N-acetylmuramate--L-alanine ligase (477 aa).

An ATP-binding site is contributed by G122–T128.

Belongs to the MurCDEF family.

The protein localises to the cytoplasm. The catalysed reaction is UDP-N-acetyl-alpha-D-muramate + L-alanine + ATP = UDP-N-acetyl-alpha-D-muramoyl-L-alanine + ADP + phosphate + H(+). It participates in cell wall biogenesis; peptidoglycan biosynthesis. Its function is as follows. Cell wall formation. This chain is UDP-N-acetylmuramate--L-alanine ligase, found in Xanthomonas euvesicatoria pv. vesicatoria (strain 85-10) (Xanthomonas campestris pv. vesicatoria).